Here is a 1020-residue protein sequence, read N- to C-terminus: Sodium/potassium-transporting ATPase subunit alpha-2 (1020 aa).

The propeptide occupies 1-5; sequence MGRGA. The segment at 1 to 31 is disordered; it reads MGRGAGREYSPAATTAENGGGKKKQKEKELD. Residues 6-85 lie on the Cytoplasmic side of the membrane; that stretch reads GREYSPAATT…NALTPPPTTP (80 aa). S10 carries the post-translational modification Phosphoserine. An interaction with phosphoinositide-3 kinase region spans residues 80 to 82; that stretch reads PPP. A helical transmembrane segment spans residues 86–106; it reads EWVKFCRQLFGGFSILLWIGA. Residues 107–129 are Extracellular-facing; sequence ILCFLAYGIQAAMEDEPSNDNLY. A helical transmembrane segment spans residues 130-150; the sequence is LGVVLAAVVIVTGCFSYYQEA. Residues 151–286 lie on the Cytoplasmic side of the membrane; that stretch reads KSSKIMDSFK…VGRTPIAMEI (136 aa). Residues 212–227 are compositionally biased toward polar residues; it reads DNSSLTGESEPQTRSP. The tract at residues 212 to 231 is disordered; that stretch reads DNSSLTGESEPQTRSPEFTH. The chain crosses the membrane as a helical span at residues 287–306; the sequence is EHFIQLITGVAVFPGVSFFV. The Extracellular segment spans residues 307-318; that stretch reads LSLILGYSWLEA. The helical transmembrane segment at 319–336 threads the bilayer; it reads VIFLIGIIVANVPEGLLA. Over 337–769 the chain is Cytoplasmic; it reads TVTVCLTLTA…EEGRLVFDNL (433 aa). D374 functions as the 4-aspartylphosphate intermediate in the catalytic mechanism. A phosphoserine mark is found at S439, S450, S496, and S559. T570 carries the post-translational modification Phosphothreonine. Phosphoserine is present on residues S587 and S672. Residues D714 and D718 each coordinate Mg(2+). A helical transmembrane segment spans residues 770–789; that stretch reads KKSIAYTLTSNIPEITPFLL. The Extracellular portion of the chain corresponds to 790–799; sequence FIIANIPLPL. Residues 800 to 820 traverse the membrane as a helical segment; the sequence is GTVTILCIDLGTDMVPAISLA. The Cytoplasmic portion of the chain corresponds to 821 to 840; that stretch reads YEAAESDIMKRQPRNSQTDK. S826 carries the phosphoserine modification. The chain crosses the membrane as a helical span at residues 841-863; that stretch reads LVNERLISMAYGQIGMIQALGGF. At 864–915 the chain is on the extracellular side; the sequence is FTYFVILAENGFLPSRLLGIRLDWDDRTMNDLEDSYGQEWTYEQRKVVEFTC. A helical membrane pass occupies residues 916–935; the sequence is HTAFFASIVVVQWADLIICK. Residues 936–948 lie on the Cytoplasmic side of the membrane; the sequence is TRRNSVFQQGMKN. S940 carries the phosphoserine; by PKA modification. A helical membrane pass occupies residues 949–967; it reads KILIFGLLEETALAAFLSY. At 968–982 the chain is on the extracellular side; that stretch reads CPGMGVALRMYPLKV. Residues 983–1003 traverse the membrane as a helical segment; that stretch reads TWWFCAFPYSLLIFIYDEVRK. At 1004–1020 the chain is on the cytoplasmic side; sequence LILRRYPGGWVEKETYY.

This sequence belongs to the cation transport ATPase (P-type) (TC 3.A.3) family. Type IIC subfamily. The sodium/potassium-transporting ATPase is composed of a catalytic alpha subunit, an auxiliary non-catalytic beta subunit and an additional regulatory subunit. Interacts with regulatory subunit FXYD1.

It localises to the membrane. Its subcellular location is the cell membrane. It carries out the reaction K(+)(out) + Na(+)(in) + ATP + H2O = K(+)(in) + Na(+)(out) + ADP + phosphate + H(+). In terms of biological role, this is the catalytic component of the active enzyme, which catalyzes the hydrolysis of ATP coupled with the exchange of sodium and potassium ions across the plasma membrane. This action creates the electrochemical gradient of sodium and potassium, providing the energy for active transport of various nutrients. In Pongo abelii (Sumatran orangutan), this protein is Sodium/potassium-transporting ATPase subunit alpha-2 (ATP1A2).